Here is a 167-residue protein sequence, read N- to C-terminus: Chorion class CB protein PC404 (167 aa).

Positions 1-55 (IGREAIVGAGLQGPFGGPWPYDALSPFDMPYGPALPAMSCGAGSFGPSSGFAPAA) are left arm. The central domain stretch occupies residues 56 to 126 (AYGGGLAVTS…GDGAVGIVAE (71 aa)). Positions 127–167 (TPFASTSVNPAYGYGGAIGGGVPYNSYGPIGYGGCGYNALY) are right arm.

It belongs to the chorion protein family.

This protein is one of many from the eggshell of the silk moth. The polypeptide is Chorion class CB protein PC404 (Antheraea polyphemus (Polyphemus moth)).